We begin with the raw amino-acid sequence, 436 residues long: MSDRQQVTNARGDRIAIVTGLRTPFAKQATAFHGVSALDMGKMVVNEMLSRSELDPKQIEQLVYGQVVLMPAAPNIAREIVLGTGMDVATDAYSVTRACATSFQSTVNVAESIMTGNIEIGIAGGADSSSVVPIGVSKKLAHALIDLNKARSFGQKLAIIRRLGLKDLLPVPPAVAEFSTGLSMGQTAEQMAKTYNISRADQDALAHRSHSLATETWNAGHLTDEVMAAHVPPYKSFIDRDNNIRENSTIESYAKLRPAFDRKHGTVTAATSTPLTDGASAVLLMSESRAKALGYDPIGYIKSYAFSAIDVWEDMLMGPSYATPLALKRAGMELEDLTLIEMHEAFAAQTLANMQMFGSKKFAAEKLGRNRAIGEIDMSKFNVLGGSLAYGHPFAATGTRLITQVCRELKRRGGGTGLTTACAAGGLGAAMIVEVE.

Catalysis depends on C99, which acts as the Acyl-thioester intermediate. Catalysis depends on proton acceptor residues H392 and C422.

The protein belongs to the thiolase-like superfamily. Thiolase family. In terms of assembly, heterotetramer of two alpha chains (FadJ) and two beta chains (FadI).

The protein localises to the cytoplasm. It carries out the reaction an acyl-CoA + acetyl-CoA = a 3-oxoacyl-CoA + CoA. Its pathway is lipid metabolism; fatty acid beta-oxidation. In terms of biological role, catalyzes the final step of fatty acid oxidation in which acetyl-CoA is released and the CoA ester of a fatty acid two carbons shorter is formed. The protein is 3-ketoacyl-CoA thiolase of Shewanella sediminis (strain HAW-EB3).